Here is a 303-residue protein sequence, read N- to C-terminus: Tyrosine-protein phosphatase 3 (303 aa).

The Tyrosine-protein phosphatase domain maps to 24–292; sequence YMIIEGLNEE…VFLYTVSQEL (269 aa). Cys-227 (phosphocysteine intermediate) is an active-site residue.

The protein belongs to the protein-tyrosine phosphatase family. Non-receptor class subfamily.

It localises to the cytoplasm. The catalysed reaction is O-phospho-L-tyrosyl-[protein] + H2O = L-tyrosyl-[protein] + phosphate. Functionally, contributes to dephosphorylation of tyrosine 15 of cdc2. This chain is Tyrosine-protein phosphatase 3 (pyp3), found in Schizosaccharomyces pombe (strain 972 / ATCC 24843) (Fission yeast).